The primary structure comprises 171 residues: Probable tryptophan transport protein (171 aa).

4 helical membrane-spanning segments follow: residues 9–31 (IINSLFLAVGVVLNQITPPILFG), 58–80 (GVVAGLLAAAVTTFPGGQLPNII), 107–129 (IITTIVGTIISGSVFLGSALIIV), and 139–161 (FITVVLPATIINAIVGTIIFVAV).

Belongs to the vitamin uptake transporter (VUT/ECF) (TC 2.A.88) family. TrpP subfamily.

Its subcellular location is the cell membrane. Its function is as follows. Probably involved in tryptophan uptake. The chain is Probable tryptophan transport protein (trpP) from Clostridium acetobutylicum (strain ATCC 824 / DSM 792 / JCM 1419 / IAM 19013 / LMG 5710 / NBRC 13948 / NRRL B-527 / VKM B-1787 / 2291 / W).